The chain runs to 262 residues: MSRIHPTAIIEPGAQLHETVEVGPYAIVGSHVTIGARTTIGSHSVIEGHTTIGEDNRIGHYASVGGRPQDMKYKDEPTRLVIGDRNTIREFTTIHTGTVQDTGVTTLGDDNWIMAYVHIGHDCRVGSHVILSSNAQMAGHVEIGDWAIVGGMSGVHQFVRIGAHSMLGGASALVQDIPPFVIAAGNKAEPHGINVEGLRRRGFSPDAISALRSAYRILYKNSLSLEEAKVQLSELAQAGGDGDAAVKSLVDFVESSQRGIIR.

It belongs to the transferase hexapeptide repeat family. LpxA subfamily. As to quaternary structure, homotrimer.

The protein localises to the cytoplasm. It catalyses the reaction a (3R)-hydroxyacyl-[ACP] + UDP-N-acetyl-alpha-D-glucosamine = a UDP-3-O-[(3R)-3-hydroxyacyl]-N-acetyl-alpha-D-glucosamine + holo-[ACP]. It functions in the pathway glycolipid biosynthesis; lipid IV(A) biosynthesis; lipid IV(A) from (3R)-3-hydroxytetradecanoyl-[acyl-carrier-protein] and UDP-N-acetyl-alpha-D-glucosamine: step 1/6. In terms of biological role, involved in the biosynthesis of lipid A, a phosphorylated glycolipid that anchors the lipopolysaccharide to the outer membrane of the cell. The sequence is that of Acyl-[acyl-carrier-protein]--UDP-N-acetylglucosamine O-acyltransferase from Burkholderia mallei (strain NCTC 10247).